The primary structure comprises 471 residues: A-type ATP synthase subunit B (471 aa).

This sequence belongs to the ATPase alpha/beta chains family. In terms of assembly, has multiple subunits with at least A(3), B(3), C, D, E, F, H, I and proteolipid K(x).

It is found in the cell membrane. Its function is as follows. Component of the A-type ATP synthase that produces ATP from ADP in the presence of a proton gradient across the membrane. The B chain is a regulatory subunit. The protein is A-type ATP synthase subunit B of Ignicoccus hospitalis (strain KIN4/I / DSM 18386 / JCM 14125).